Reading from the N-terminus, the 845-residue chain is Molybdenum cofactor sulfurase (845 aa).

Position 240 is an N6-(pyridoxal phosphate)lysine (lysine 240). Cysteine 404 is an active-site residue. Positions 666–840 constitute an MOSC domain; it reads SFPQDSSPSS…LMVGDTVTPS (175 aa).

The protein belongs to the class-V pyridoxal-phosphate-dependent aminotransferase family. MOCOS subfamily. It depends on pyridoxal 5'-phosphate as a cofactor.

It carries out the reaction Mo-molybdopterin + L-cysteine + AH2 = thio-Mo-molybdopterin + L-alanine + A + H2O. It functions in the pathway cofactor biosynthesis; molybdopterin biosynthesis. Functionally, sulfurates the molybdenum cofactor. Sulfation of molybdenum is essential for xanthine dehydrogenase (XDH) and aldehyde oxidase (ADO) enzymes in which molybdenum cofactor is liganded by 1 oxygen and 1 sulfur atom in active form. The polypeptide is Molybdenum cofactor sulfurase (Aspergillus clavatus (strain ATCC 1007 / CBS 513.65 / DSM 816 / NCTC 3887 / NRRL 1 / QM 1276 / 107)).